The sequence spans 345 residues: D-erythrose-4-phosphate dehydrogenase (345 aa).

11-12 (RI) provides a ligand contact to NAD(+). Substrate is bound by residues 158–160 (SCT), Arg204, 217–218 (TK), and Arg240. Cys159 serves as the catalytic Nucleophile. Residue Asn322 coordinates NAD(+).

The protein belongs to the glyceraldehyde-3-phosphate dehydrogenase family. Epd subfamily. Homotetramer.

Its subcellular location is the cytoplasm. It catalyses the reaction D-erythrose 4-phosphate + NAD(+) + H2O = 4-phospho-D-erythronate + NADH + 2 H(+). The protein operates within cofactor biosynthesis; pyridoxine 5'-phosphate biosynthesis; pyridoxine 5'-phosphate from D-erythrose 4-phosphate: step 1/5. Functionally, catalyzes the NAD-dependent conversion of D-erythrose 4-phosphate to 4-phosphoerythronate. The chain is D-erythrose-4-phosphate dehydrogenase from Vibrio parahaemolyticus serotype O3:K6 (strain RIMD 2210633).